Here is a 337-residue protein sequence, read N- to C-terminus: 4-hydroxy-2-oxovalerate aldolase (337 aa).

Residues 6–256 (IRIMDTTLRD…ETGIDLFQIM (251 aa)) form the Pyruvate carboxyltransferase domain. 14–15 (RD) provides a ligand contact to substrate. Asp15 serves as a coordination point for Mn(2+). His18 functions as the Proton acceptor in the catalytic mechanism. Substrate-binding residues include Ser168 and His195. Residues His195 and His197 each contribute to the Mn(2+) site. Tyr286 lines the substrate pocket.

This sequence belongs to the 4-hydroxy-2-oxovalerate aldolase family.

The enzyme catalyses (S)-4-hydroxy-2-oxopentanoate = acetaldehyde + pyruvate. In Geobacillus genomosp. 3, this protein is 4-hydroxy-2-oxovalerate aldolase (nahM).